A 409-amino-acid chain; its full sequence is Elongation factor Tu (409 aa).

The tr-type G domain occupies 10–214 (KPHVNVGTIG…AVDNYIPTPE (205 aa)). The segment at 19–26 (GHVDHGKT) is G1. Position 19-26 (19-26 (GHVDHGKT)) interacts with GTP. Threonine 26 is a Mg(2+) binding site. Residues 60-64 (GITIN) are G2. A G3 region spans residues 81–84 (DCPG). GTP-binding positions include 81-85 (DCPGH) and 136-139 (NKVD). Residues 136–139 (NKVD) are G4. A G5 region spans residues 174–176 (SGL).

Belongs to the TRAFAC class translation factor GTPase superfamily. Classic translation factor GTPase family. EF-Tu/EF-1A subfamily. Monomer.

The protein resides in the cytoplasm. The catalysed reaction is GTP + H2O = GDP + phosphate + H(+). Functionally, GTP hydrolase that promotes the GTP-dependent binding of aminoacyl-tRNA to the A-site of ribosomes during protein biosynthesis. In Thermosynechococcus vestitus (strain NIES-2133 / IAM M-273 / BP-1), this protein is Elongation factor Tu.